Here is a 645-residue protein sequence, read N- to C-terminus: Sodium/hydrogen exchanger 9 (645 aa).

At 1-20 the chain is on the lumenal side; sequence MERQSRVMSEKDEYQFQHQG. Residues 21–41 form a helical membrane-spanning segment; sequence AVELLVFNFLLILTILTIWLF. Topologically, residues 42–45 are cytoplasmic; that stretch reads KNHR. A helical membrane pass occupies residues 46–66; the sequence is FRFLHETGGAMVYGLIMGLIL. The Lumenal portion of the chain corresponds to 67 to 126; the sequence is RYATAPTDIESGTVYDCVKLTFSPSTLLVNITDQVYEYKYKREISQHNINPHQGNAILEK. A glycan (N-linked (GlcNAc...) asparagine) is linked at asparagine 96. The helical transmembrane segment at 127-147 threads the bilayer; that stretch reads MTFDPEIFFNVLLPPIIFHAG. Over 148 to 164 the chain is Cytoplasmic; it reads YSLKKRHFFQNLGSILT. Residues 165 to 185 traverse the membrane as a helical segment; that stretch reads YAFLGTAISCIVIGLIMYGFV. At 186–203 the chain is on the lumenal side; it reads KAMIHAGQLKNGDFHFTD. A helical transmembrane segment spans residues 204–224; the sequence is CLFFGSLMSATDPVTVLAIFH. Over 225 to 235 the chain is Cytoplasmic; it reads ELHVDPDLYTL. Residues 236–256 traverse the membrane as a helical segment; it reads LFGESVLNDAVAIVLTYSISI. At 257-277 the chain is on the lumenal side; it reads YSPKENPNAFDAAAFFQSVGN. A helical transmembrane segment spans residues 278 to 298; that stretch reads FLGIFAGSFAMGSAYAIITAL. Residues 299–301 are Cytoplasmic-facing; the sequence is LTK. Transmembrane regions (helical) follow at residues 302–322 and 323–343; these read FTKL…LSWS and AFLS…FCGV. Over 344 to 364 the chain is Cytoplasmic; that stretch reads TQAHYTYNNLSSDSKIRTKQL. A helical membrane pass occupies residues 365 to 385; it reads FEFMNFLAENVIFCYMGLALF. Position 386 (threonine 386) is a topological domain, lumenal. Residues 387–407 traverse the membrane as a helical segment; sequence FQNHIFNALFILGAFLAIFVA. The Cytoplasmic segment spans residues 408-429; it reads RACNIYPLSFLLNLGRKQKIPW. A helical transmembrane segment spans residues 430-450; sequence NFQHMMMFSGLRGAIAFALAI. Topologically, residues 451–465 are lumenal; that stretch reads RNTESQPKQMMFTTT. Residues 466-486 form a helical membrane-spanning segment; sequence LLLVFFTVWVFGGGTTPMLTW. Residues 487–645 are Cytoplasmic-facing; it reads LQIRVGVDLD…EQTLGQSQLN (159 aa). A disordered region spans residues 594–622; sequence QASSPCSPPARLGLDQKASPQTPGKENIY.

The protein belongs to the monovalent cation:proton antiporter 1 (CPA1) transporter (TC 2.A.36) family. In terms of assembly, homodimer; phosphatidylinositol-4,5-bisphosphate (PIP2) and phosphatidylinositol 3,4,5-trisphosphate (PIP3) could be involved in the dimer stabilization. Interacts (via the C-terminus) with RACK1. Interacts with CHP1. As to expression, ubiquitously expressed in all tissues tested. Expressed at highest levels in heart and skeletal muscle, followed by placenta, kidney, and liver. Expressed in the brain, in the medulla and spinal cord.

The protein localises to the late endosome membrane. It is found in the early endosome membrane. The protein resides in the recycling endosome membrane. Its subcellular location is the cell membrane. It localises to the cytoplasmic vesicle. The protein localises to the phagosome membrane. The catalysed reaction is Na(+)(in) + H(+)(out) = Na(+)(out) + H(+)(in). The enzyme catalyses K(+)(in) + H(+)(out) = K(+)(out) + H(+)(in). In terms of biological role, endosomal Na(+), K(+)/H(+) antiporter. Mediates the electroneutral exchange of endosomal luminal H(+) for a cytosolic Na(+) or K(+). By facilitating proton efflux, SLC9A9 counteracts the acidity generated by vacuolar (V)-ATPase, thereby limiting luminal acidification. Regulates organellar pH and consequently, e.g., endosome maturation and endocytic trafficking of plasma membrane receptors and neurotransporters. Promotes the recycling of transferrin receptors back to the cell surface to facilitate additional iron uptake in the brain. Regulates synaptic transmission by regulating the luminal pH of axonal endosomes. Regulates phagosome lumenal pH, thus affecting phagosome maturation, and consequently, microbicidal activity in macrophages. Can also be active at the cell surface of specialized cells, e.g., in the inner ear hair bundles uses the high K(+) of the endolymph to regulate intracelular pH. The chain is Sodium/hydrogen exchanger 9 from Homo sapiens (Human).